We begin with the raw amino-acid sequence, 364 residues long: 4-hydroxythreonine-4-phosphate dehydrogenase (364 aa).

Substrate-binding residues include histidine 148 and threonine 149. Histidine 177, histidine 216, and histidine 301 together coordinate a divalent metal cation. Substrate-binding residues include lysine 309, asparagine 318, and arginine 327.

Belongs to the PdxA family. Homodimer. Zn(2+) is required as a cofactor. Requires Mg(2+) as cofactor. Co(2+) serves as cofactor.

The protein resides in the cytoplasm. It carries out the reaction 4-(phosphooxy)-L-threonine + NAD(+) = 3-amino-2-oxopropyl phosphate + CO2 + NADH. It participates in cofactor biosynthesis; pyridoxine 5'-phosphate biosynthesis; pyridoxine 5'-phosphate from D-erythrose 4-phosphate: step 4/5. Its function is as follows. Catalyzes the NAD(P)-dependent oxidation of 4-(phosphooxy)-L-threonine (HTP) into 2-amino-3-oxo-4-(phosphooxy)butyric acid which spontaneously decarboxylates to form 3-amino-2-oxopropyl phosphate (AHAP). In Campylobacter jejuni subsp. jejuni serotype O:23/36 (strain 81-176), this protein is 4-hydroxythreonine-4-phosphate dehydrogenase.